Here is a 252-residue protein sequence, read N- to C-terminus: Iron-sulfur cluster co-chaperone protein HscB homolog (252 aa).

Residues 1-59 (MKKTKTMVASISTLIRRTYPSTNQCNSLATIQSQTQLPRESLQHHSSAEGRLRFSGRVF) constitute a mitochondrion transit peptide. In terms of domain architecture, J spans 93 to 165 (DYFQIFGLEK…LSRAMYIMKL (73 aa)).

This sequence belongs to the HscB family. In terms of assembly, interacts with ISU1 and HSP70-9/HSCA1.

The protein resides in the mitochondrion. The protein localises to the cytoplasm. It is found in the cytosol. Co-chaperone required for the assembly of iron-sulfur [Fe-S] clusters in both mitochondria and cytosol. Required for the activity of iron-sulfur proteins such as aconitase and succinate dehydrogenase. Involved in iron homeostasis and may take part in the control of iron translocation from roots to shoots. The polypeptide is Iron-sulfur cluster co-chaperone protein HscB homolog (Arabidopsis thaliana (Mouse-ear cress)).